We begin with the raw amino-acid sequence, 219 residues long: Poxin (219 aa).

The active-site Proton donor is the H17. Y138 (shared with catalytic histidine of dimeric partner) is an active-site residue. K142 (proton acceptor; shared with catalytic histidine of dimeric partner) is an active-site residue.

This sequence belongs to the poxin family. Homodimer.

It carries out the reaction 2',3'-cGAMP + H2O = Gp(2'-5')Ap(3') + H(+). In terms of biological role, nuclease that is responsible for viral evasion of host cGAS-STING innate immunity. Cleaves 2',3'-cGAMP which is produced by host cGAS following recognition of cytosolic DNA and blocks the subsequent 2',3'-cGAMP-mediated activation of TMEM173/STING, which normally spreads to adjacent cells and activates the interferon and NF-kappa-B immune responses. The chain is Poxin (OPG188) from Bos taurus (Bovine).